We begin with the raw amino-acid sequence, 946 residues long: Ent-kaur-16-ene synthase (946 aa).

Residues Asp656, Glu660, Asn839, Asp840, Ser843, and Asp847 each coordinate Mg(2+). Residues 656–660 carry the DEXXE motif motif; that stretch reads DEFFE.

It belongs to the terpene synthase family. It depends on Mg(2+) as a cofactor.

It catalyses the reaction ent-copalyl diphosphate = ent-kaur-16-ene + diphosphate. It carries out the reaction (2E,6E,10E)-geranylgeranyl diphosphate = ent-copalyl diphosphate. The protein operates within plant hormone biosynthesis; gibberellin biosynthesis. Functionally, catalyzes the conversion of geranylgeranyl diphosphate to the gibberellin precursor ent-kaurene diphosphate in a two step process. In Phaeosphaeria sp. (strain L487), this protein is Ent-kaur-16-ene synthase.